A 640-amino-acid chain; its full sequence is Calpain-5 (640 aa).

A Calpain catalytic domain is found at 26-343 (LFEDPHFPAS…FTDIIKCRLI (318 aa)). Residues cysteine 81, histidine 252, and asparagine 284 contribute to the active site. Residues 344 to 496 (NTSYLSIHKT…VFTDVPSNCR (153 aa)) are domain III. A C2 domain is found at 499–617 (RLDEPPRTCW…HSLHLQDRSG (119 aa)).

This sequence belongs to the peptidase C2 family.

Functionally, calcium-regulated non-lysosomal thiol-protease. The chain is Calpain-5 (Capn5) from Rattus norvegicus (Rat).